The sequence spans 260 residues: Small ribosomal subunit protein uS2 (260 aa).

The protein belongs to the universal ribosomal protein uS2 family.

This chain is Small ribosomal subunit protein uS2, found in Streptococcus sanguinis (strain SK36).